The following is a 62-amino-acid chain: Venom peptide SjAPI-2 (62 aa).

5 disulfide bridges follow: Cys4/Cys40, Cys14/Cys36, Cys18/Cys32, Cys22/Cys60, and Cys42/Cys54. The TIL domain maps to 4–60; the sequence is CRISGEVFTWCGTTCPLTCENFRNPPKHCPQGCFVGCMCRRGLVRHRNGRCVRPPRC.

Belongs to the serine protease inhibitor-like (TIL domain-containing) family. As to expression, expressed by the venom gland.

The protein localises to the secreted. Functionally, serine protease inhibitor. The sequence is that of Venom peptide SjAPI-2 from Scorpiops jendeki (Scorpion).